A 448-amino-acid chain; its full sequence is Methylenetetrahydrofolate--tRNA-(uracil-5-)-methyltransferase TrmFO (448 aa).

13-18 contacts FAD; it reads GAGLAG.

It belongs to the MnmG family. TrmFO subfamily. FAD is required as a cofactor.

The protein localises to the cytoplasm. It catalyses the reaction uridine(54) in tRNA + (6R)-5,10-methylene-5,6,7,8-tetrahydrofolate + NADH + H(+) = 5-methyluridine(54) in tRNA + (6S)-5,6,7,8-tetrahydrofolate + NAD(+). The enzyme catalyses uridine(54) in tRNA + (6R)-5,10-methylene-5,6,7,8-tetrahydrofolate + NADPH + H(+) = 5-methyluridine(54) in tRNA + (6S)-5,6,7,8-tetrahydrofolate + NADP(+). Functionally, catalyzes the folate-dependent formation of 5-methyl-uridine at position 54 (M-5-U54) in all tRNAs. The polypeptide is Methylenetetrahydrofolate--tRNA-(uracil-5-)-methyltransferase TrmFO (Streptococcus pyogenes serotype M28 (strain MGAS6180)).